Here is a 554-residue protein sequence, read N- to C-terminus: Putative acyl-coenzyme A synthetase (554 aa).

Residue 195 to 206 coordinates AMP; sequence LLYSSGTTGPPK.

Belongs to the ATP-dependent AMP-binding enzyme family.

The protein is Putative acyl-coenzyme A synthetase of Emericella nidulans (strain FGSC A4 / ATCC 38163 / CBS 112.46 / NRRL 194 / M139) (Aspergillus nidulans).